The chain runs to 42 residues: Snaclec lebecetin subunit alpha (42 aa).

The region spanning 1-42 is the C-type lectin domain; sequence DQDCLPGWSSHEGHCYKVFNLDKTWEDAEKFCTEQPSNGHLV. Cysteines 4 and 15 form a disulfide.

Heterodimer of subunits alpha and beta; disulfide-linked. It depends on Ca(2+) as a cofactor. In terms of processing, glycosylated. In terms of tissue distribution, expressed by the venom gland.

The protein localises to the secreted. Its function is as follows. Binds to the platelet GPIb/IX/V receptor system and inhibits ristocetin-induced platelet aggregation in human platelet-rich plasma. Strongly inhibits platelet aggregation induced by ADP, calcium ionophore, thrombin and collagen. Does not inhibit U46619-induced platelet aggregation. The polypeptide is Snaclec lebecetin subunit alpha (Macrovipera lebetinus (Levantine viper)).